The chain runs to 262 residues: Adenosylcobinamide-GDP ribazoletransferase (262 aa).

A run of 6 helical transmembrane segments spans residues 43–63 (YFGL…WLTQ), 66–86 (LPAG…TGGF), 120–140 (GALA…ELAL), 146–166 (AGSA…SIIF), 191–211 (LLIL…LAAL), and 242–262 (AAQQ…GNIL).

Belongs to the CobS family. Mg(2+) is required as a cofactor.

It is found in the cell inner membrane. The enzyme catalyses alpha-ribazole + adenosylcob(III)inamide-GDP = adenosylcob(III)alamin + GMP + H(+). It carries out the reaction alpha-ribazole 5'-phosphate + adenosylcob(III)inamide-GDP = adenosylcob(III)alamin 5'-phosphate + GMP + H(+). The protein operates within cofactor biosynthesis; adenosylcobalamin biosynthesis; adenosylcobalamin from cob(II)yrinate a,c-diamide: step 7/7. In terms of biological role, joins adenosylcobinamide-GDP and alpha-ribazole to generate adenosylcobalamin (Ado-cobalamin). Also synthesizes adenosylcobalamin 5'-phosphate from adenosylcobinamide-GDP and alpha-ribazole 5'-phosphate. The sequence is that of Adenosylcobinamide-GDP ribazoletransferase from Shewanella baltica (strain OS185).